The chain runs to 288 residues: 4-diphosphocytidyl-2-C-methyl-D-erythritol kinase (288 aa).

The active site involves K8. 90 to 100 (PVGAGLAGGSS) is an ATP binding site. Residue D132 is part of the active site.

Belongs to the GHMP kinase family. IspE subfamily.

The catalysed reaction is 4-CDP-2-C-methyl-D-erythritol + ATP = 4-CDP-2-C-methyl-D-erythritol 2-phosphate + ADP + H(+). The protein operates within isoprenoid biosynthesis; isopentenyl diphosphate biosynthesis via DXP pathway; isopentenyl diphosphate from 1-deoxy-D-xylulose 5-phosphate: step 3/6. In terms of biological role, catalyzes the phosphorylation of the position 2 hydroxy group of 4-diphosphocytidyl-2C-methyl-D-erythritol. In Chlamydia trachomatis serovar A (strain ATCC VR-571B / DSM 19440 / HAR-13), this protein is 4-diphosphocytidyl-2-C-methyl-D-erythritol kinase.